Reading from the N-terminus, the 848-residue chain is DNA-binding protein RFX6 (848 aa).

Positions 56–131 (TLQWLEDNYI…YHYYGIGIKE (76 aa)) form a DNA-binding region, RFX-type winged-helix.

Belongs to the RFX family. In terms of tissue distribution, expressed in progenitors and hormone expressing cells of the islet lineage.

The protein resides in the nucleus. Transcription factor required to direct islet cell differentiation during endocrine pancreas development. This is DNA-binding protein RFX6 (rfx6) from Danio rerio (Zebrafish).